The sequence spans 499 residues: Nuclear receptor-binding protein 2 (499 aa).

Residues 1-31 (MAAPEPAPRRGREREREDESEDESDILEESP) form a disordered region. Over residues 7 to 17 (APRRGRERERE) the composition is skewed to basic and acidic residues. The segment covering 18–28 (DESEDESDILE) has biased composition (acidic residues). Residues 36–304 (QKRREQVNQG…AHNLLFHRVL (269 aa)) enclose the Protein kinase domain. Positions 396–416 (APPPEEAQKAKTPTPEPFDSE) are disordered. 2 positions are modified to phosphothreonine: Thr-407 and Thr-409.

The protein belongs to the protein kinase superfamily. Ser/Thr protein kinase family. As to expression, expressed in Purkinje cells of the cerebellum and neurons in the CA3 region of the hippocampus. Also detected in non-neural tissues including mesenchymal layer adjacent to epithelium in developing bronchi of the lung, the epithelium of the stomach as well as cells in the liver.

It localises to the cytoplasm. Its function is as follows. May regulate apoptosis of neural progenitor cells during their differentiation. The sequence is that of Nuclear receptor-binding protein 2 from Mus musculus (Mouse).